Here is a 227-residue protein sequence, read N- to C-terminus: Glutathione S-transferase U27 (227 aa).

Positions 4–84 constitute a GST N-terminal domain; it reads EEVVVLNFWP…YIDEVWKDDK (81 aa). Residues 14 to 15, 41 to 42, 55 to 56, and 68 to 69 each bind glutathione; these read SM, QK, KI, and ES. A GST C-terminal domain is found at 92-217; that stretch reads DPYQKSQCRF…LKIFDRVTQI (126 aa).

The protein belongs to the GST superfamily. Tau family.

The protein resides in the cytoplasm. Its subcellular location is the cytosol. The catalysed reaction is RX + glutathione = an S-substituted glutathione + a halide anion + H(+). May be involved in the conjugation of reduced glutathione to a wide number of exogenous and endogenous hydrophobic electrophiles and have a detoxification role against certain herbicides. The chain is Glutathione S-transferase U27 (GSTU27) from Arabidopsis thaliana (Mouse-ear cress).